The chain runs to 313 residues: Glutathione synthetase (313 aa).

The ATP-grasp domain occupies 125-309 (KLFVMDFTEL…IAAKIWDVIE (185 aa)). 151–207 (RAEHGAVVMKPLHGHGGAAVFRVLPQDINFGSLYDMFAVTFREPWVIQRFLPEVKHG) contacts ATP. Mg(2+) contacts are provided by Glu280 and Asn282.

This sequence belongs to the prokaryotic GSH synthase family. The cofactor is Mg(2+). Mn(2+) serves as cofactor.

It carries out the reaction gamma-L-glutamyl-L-cysteine + glycine + ATP = glutathione + ADP + phosphate + H(+). Its pathway is sulfur metabolism; glutathione biosynthesis; glutathione from L-cysteine and L-glutamate: step 2/2. This chain is Glutathione synthetase, found in Rhodopseudomonas palustris (strain ATCC BAA-98 / CGA009).